Consider the following 692-residue polypeptide: Glycine--tRNA ligase beta subunit (692 aa).

It belongs to the class-II aminoacyl-tRNA synthetase family. In terms of assembly, tetramer of two alpha and two beta subunits.

The protein localises to the cytoplasm. It carries out the reaction tRNA(Gly) + glycine + ATP = glycyl-tRNA(Gly) + AMP + diphosphate. This chain is Glycine--tRNA ligase beta subunit, found in Pseudoalteromonas atlantica (strain T6c / ATCC BAA-1087).